A 1149-amino-acid polypeptide reads, in one-letter code: Protein deacetylase HDAC6 (1149 aa).

A disordered region spans residues 1–61 (MTSTGQDSST…KGKMKKLSQP (61 aa)). A compositionally biased stretch (polar residues) spans 18–29 (NPQSPLQESSAT). Ser21 is modified (phosphoserine). Residue Arg32 is modified to Omega-N-methylarginine. Ser43 bears the Phosphoserine mark. The Nuclear export signal motif lies at 66–75 (LVVGLQGLDL). Histone deacetylase stretches follow at residues 87 to 403 (LVFD…TLLG) and 481 to 799 (GLVY…SLLG). His215 acts as the 1 in catalysis. His610 functions as the 2 in the catalytic mechanism. The interval 954 to 975 (ALGETEPTPPASHTNKQTTGAS) is disordered. Residues Thr958, Thr961, Thr967, and Thr971 each carry the phosphothreonine modification. Residues 964–975 (ASHTNKQTTGAS) show a composition bias toward polar residues. Ser975 bears the Phosphoserine mark. The UBP-type zinc-finger motif lies at 1045–1143 (SWCPHLMAVC…NAAHQNKFGE (99 aa)). Zn(2+) contacts are provided by Cys1047, His1049, Cys1067, Cys1070, Cys1079, Cys1082, and Cys1087. Residues 1088 to 1090 (SRY) are ubiquitin binding. Residues His1094, His1098, His1104, Cys1117, and Cys1120 each contribute to the Zn(2+) site. Positions 1116–1123 (WCYVCQAY) are ubiquitin binding. Residue Ser1148 is modified to Phosphoserine.

This sequence belongs to the histone deacetylase family. HD type 2 subfamily. In terms of assembly, forms a trimeric complex in the nucleus consisting of BANP, HDAC6 and KHDRBS1/SAM68; HDAC6 keeps KHDRBS1 in a deacetylated state which inhibits the inclusion of CD44 alternate exons. The complex is disrupted by MAPK1/MAPK3-mediated phosphorylation of BANP which results in BANP export to the cytoplasm. This facilitates acetylation of KHDRBS1 and CD44 variant exon inclusion. Interacts with SIRT2 (via both phosphorylated, unphosphorylated, active or inactive forms); the interaction is necessary for the complex to interact with alpha-tubulin. Under proteasome impairment conditions, interacts with UBD via its histone deacetylase 1 and UBP-type zinc-finger regions. Interacts with BBIP1, CBFA2T3, CYLD, DDIT3/CHOP, ZMYND15, F-actin and HDAC11. Interacts with RIPOR2; this interaction occurs during early myogenic differentiation and prevents HDAC6 to deacetylate tubulin. Interacts with AURKA; AURKA-mediated phosphorylation of HDAC6 promotes deacetylation of alpha-tubulin. Interacts with DYSF; this interaction occurs during early myogenic differentiation. Interacts with TPPP; inhibiting the tubulin deacetylase activity of HDAC6. Interacts with DYNLL1. Interacts with ATP13A2; the interaction results in recruitment of HDAC6 to lysosomes to promote CTTN deacetylation. Interacts with CCDC141 (via the N-terminal region); inhibiting the deacetylase activity of HDAC6. Interacts with IPO7; the interaction facilitates HDAC6 nuclear translocation in dental papilla cells. Requires Zn(2+) as cofactor. Phosphorylated by AURKA; phosphorylation increases HDAC6-mediated deacetylation of alpha-tubulin and subsequent disassembly of cilia. Post-translationally, ubiquitinated. Its polyubiquitination however does not lead to its degradation. In terms of processing, sumoylated in vitro. Expressed in neurons of the cortex. Expressed in Purkinje cells. Detected in keratinocytes (at protein level).

The protein resides in the cytoplasm. It is found in the cytoskeleton. The protein localises to the nucleus. Its subcellular location is the perikaryon. It localises to the cell projection. The protein resides in the dendrite. It is found in the axon. The protein localises to the cilium. Its subcellular location is the microtubule organizing center. It localises to the centrosome. The protein resides in the cilium basal body. The catalysed reaction is N(6)-acetyl-L-lysyl-[protein] + H2O = L-lysyl-[protein] + acetate. It carries out the reaction N(6)-acetyl-L-lysyl-[alpha-tubulin] + H2O = L-lysyl-[alpha-tubulin] + acetate. It functions in the pathway protein modification; protein ubiquitination. Its function is as follows. Deacetylates a wide range of non-histone substrates. Plays a central role in microtubule-dependent cell motility by mediating deacetylation of tubulin. Required for cilia disassembly via deacetylation of alpha-tubulin. Alpha-tubulin deacetylation results in destabilization of dynamic microtubules. Promotes deacetylation of CTTN, leading to actin polymerization, promotion of autophagosome-lysosome fusion and completion of autophagy. Deacetylates SQSTM1. Deacetylates peroxiredoxins PRDX1 and PRDX2, decreasing their reducing activity. Deacetylates antiviral protein RIGI in the presence of viral mRNAs which is required for viral RNA detection by RIGI. Sequentially deacetylates and polyubiquitinates DNA mismatch repair protein MSH2 which leads to MSH2 degradation, reducing cellular sensitivity to DNA-damaging agents and decreasing cellular DNA mismatch repair activities. Deacetylates DNA mismatch repair protein MLH1 which prevents recruitment of the MutL alpha complex (formed by the MLH1-PMS2 heterodimer) to the MutS alpha complex (formed by the MSH2-MSH6 heterodimer), leading to tolerance of DNA damage. Deacetylates RHOT1/MIRO1 which blocks mitochondrial transport and mediates axon growth inhibition. Deacetylates transcription factor SP1 which leads to increased expression of ENG, positively regulating angiogenesis. Deacetylates KHDRBS1/SAM68 which regulates alternative splicing by inhibiting the inclusion of CD44 alternate exons. Promotes odontoblast differentiation following IPO7-mediated nuclear import and subsequent repression of RUNX2 expression. In addition to its protein deacetylase activity, plays a key role in the degradation of misfolded proteins: when misfolded proteins are too abundant to be degraded by the chaperone refolding system and the ubiquitin-proteasome, mediates the transport of misfolded proteins to a cytoplasmic juxtanuclear structure called aggresome. Probably acts as an adapter that recognizes polyubiquitinated misfolded proteins and target them to the aggresome, facilitating their clearance by autophagy. The chain is Protein deacetylase HDAC6 from Mus musculus (Mouse).